Consider the following 146-residue polypeptide: Hemoglobin subunit beta-1 (146 aa).

Residues 2–146 form the Globin domain; the sequence is EWTDKERAII…VVSALGKQYH (145 aa). 2 residues coordinate heme b: His63 and His92.

Belongs to the globin family. As to quaternary structure, hb 1 is a heterotetramer of two alpha-1 and two beta-1 chains. In terms of tissue distribution, red blood cells.

Functionally, involved in oxygen transport from gills to the various peripheral tissues. The protein is Hemoglobin subunit beta-1 (hbb1) of Gobionotothen gibberifrons (Humped rockcod).